Consider the following 378-residue polypeptide: Ribosomal RNA large subunit methyltransferase G (378 aa).

The protein belongs to the methyltransferase superfamily. RlmG family.

The protein localises to the cytoplasm. The catalysed reaction is guanosine(1835) in 23S rRNA + S-adenosyl-L-methionine = N(2)-methylguanosine(1835) in 23S rRNA + S-adenosyl-L-homocysteine + H(+). Functionally, specifically methylates the guanine in position 1835 (m2G1835) of 23S rRNA. The chain is Ribosomal RNA large subunit methyltransferase G from Shewanella baltica (strain OS155 / ATCC BAA-1091).